We begin with the raw amino-acid sequence, 116 residues long: Probable transcriptional regulator WhiB6 (116 aa).

Positions 12, 53, 56, and 62 each coordinate [4Fe-4S] cluster. A 4Fe-4S Wbl-type domain is found at 33–86 (VCTQDPDRWTTTPDDEAKTLCRACPRRWLCARDAVESAGAEGLWAGVVIPESGR).

Belongs to the WhiB family. [4Fe-4S] cluster serves as cofactor. The Fe-S cluster can be nitrosylated by nitric oxide (NO). Post-translationally, upon Fe-S cluster removal intramolecular disulfide bonds are formed.

The protein resides in the cytoplasm. In terms of biological role, acts as a transcriptional regulator. Probably redox-responsive. The apo- but not holo-form probably binds DNA. The protein is Probable transcriptional regulator WhiB6 (whiB6) of Mycobacterium tuberculosis (strain CDC 1551 / Oshkosh).